The primary structure comprises 343 residues: 3-dehydroquinate synthase (343 aa).

NAD(+) contacts are provided by residues 61–66, 95–99, 119–120, Lys132, Lys141, and 159–162; these read SGEKYK, GVISD, TT, and FLKT. Zn(2+) contacts are provided by Glu174, His231, and His248.

Belongs to the sugar phosphate cyclases superfamily. Dehydroquinate synthase family. The cofactor is NAD(+). Requires Co(2+) as cofactor. Zn(2+) serves as cofactor.

The protein resides in the cytoplasm. The catalysed reaction is 7-phospho-2-dehydro-3-deoxy-D-arabino-heptonate = 3-dehydroquinate + phosphate. It participates in metabolic intermediate biosynthesis; chorismate biosynthesis; chorismate from D-erythrose 4-phosphate and phosphoenolpyruvate: step 2/7. Catalyzes the conversion of 3-deoxy-D-arabino-heptulosonate 7-phosphate (DAHP) to dehydroquinate (DHQ). This Helicobacter pylori (strain J99 / ATCC 700824) (Campylobacter pylori J99) protein is 3-dehydroquinate synthase.